Here is a 444-residue protein sequence, read N- to C-terminus: Xylose isomerase (444 aa).

Residues histidine 101 and aspartate 104 contribute to the active site. Mg(2+) is bound by residues glutamate 232, glutamate 268, histidine 271, aspartate 296, aspartate 307, aspartate 309, and aspartate 339.

It belongs to the xylose isomerase family. Homotetramer. The cofactor is Mg(2+).

The protein localises to the cytoplasm. It catalyses the reaction alpha-D-xylose = alpha-D-xylulofuranose. The chain is Xylose isomerase from Thermotoga petrophila (strain ATCC BAA-488 / DSM 13995 / JCM 10881 / RKU-1).